Reading from the N-terminus, the 325-residue chain is Probable cell division protein WhiA (325 aa).

Positions 280–313 form a DNA-binding region, H-T-H motif; sequence SLKELGNMLEKPLGKSGVNHRLRKIDKIAEELRK.

It belongs to the WhiA family.

Involved in cell division and chromosome segregation. In Caldicellulosiruptor bescii (strain ATCC BAA-1888 / DSM 6725 / KCTC 15123 / Z-1320) (Anaerocellum thermophilum), this protein is Probable cell division protein WhiA.